We begin with the raw amino-acid sequence, 953 residues long: Coatomer subunit beta (953 aa).

T2 carries the post-translational modification N-acetylthreonine. HEAT repeat units lie at residues 96–131, 132–168, 240–276, 277–314, 316–353, and 396–433; these read HEMI…KEAE, LLEP…NFEH, SERA…SAPT, AIKA…HPAH, RVLQ…SRNV, and DMAA…RFDN. K494 is modified (N6-acetyllysine).

Oligomeric complex that consists of at least the alpha, beta, beta', gamma, delta, epsilon and zeta subunits. Interacts with CAPN8 and PRKCE. Interacts with SCYL1. Interacts with COPG1. Interacts with ARF1 (myristoylated); this interaction is required for binding of COPB1 to Golgi membranes. Interacts (via trunk domain) with ARF1 (via switch I region); the interaction is direct. Interacts with KCNK2 (via N-terminus); this interaction increases the channel-mediated whole cell currents and promotes plasma membrane expression of KCNK2. Interacts with STX17. Interacts with TMEM115. Interacts with TMEM41B. In terms of tissue distribution, high expression in the lung, kidney, skeletal muscle and small intestine, and lower level of expression in heart, liver, spleen, stomach and fat.

The protein resides in the cytoplasm. The protein localises to the golgi apparatus membrane. It is found in the cytoplasmic vesicle. Its subcellular location is the COPI-coated vesicle membrane. It localises to the cell membrane. The protein resides in the endoplasmic reticulum-Golgi intermediate compartment. Its function is as follows. The coatomer is a cytosolic protein complex that binds to dilysine motifs and reversibly associates with Golgi non-clathrin-coated vesicles, which further mediate biosynthetic protein transport from the ER, via the Golgi up to the trans Golgi network. Coatomer complex is required for budding from Golgi membranes, and is essential for the retrograde Golgi-to-ER transport of dilysine-tagged proteins. In mammals, the coatomer can only be recruited by membranes associated to ADP-ribosylation factors (ARFs), which are small GTP-binding proteins; the complex also influences the Golgi structural integrity, as well as the processing, activity, and endocytic recycling of LDL receptors. Plays a functional role in facilitating the transport of kappa-type opioid receptor mRNAs into axons and enhances translation of these proteins. Required for limiting lipid storage in lipid droplets. Involved in lipid homeostasis by regulating the presence of perilipin family members PLIN2 and PLIN3 at the lipid droplet surface and promoting the association of adipocyte surface triglyceride lipase (PNPLA2) with the lipid droplet to mediate lipolysis. Involved in the Golgi disassembly and reassembly processes during cell cycle. Involved in autophagy by playing a role in early endosome function. Plays a role in organellar compartmentalization of secretory compartments including endoplasmic reticulum (ER)-Golgi intermediate compartment (ERGIC), Golgi, trans-Golgi network (TGN) and recycling endosomes, and in biosynthetic transport of CAV1. In Sus scrofa (Pig), this protein is Coatomer subunit beta.